The sequence spans 341 residues: Tetraacyldisaccharide 4'-kinase (341 aa).

57–64 (TVGGTGKT) serves as a coordination point for ATP.

This sequence belongs to the LpxK family.

It carries out the reaction a lipid A disaccharide + ATP = a lipid IVA + ADP + H(+). It participates in glycolipid biosynthesis; lipid IV(A) biosynthesis; lipid IV(A) from (3R)-3-hydroxytetradecanoyl-[acyl-carrier-protein] and UDP-N-acetyl-alpha-D-glucosamine: step 6/6. Its function is as follows. Transfers the gamma-phosphate of ATP to the 4'-position of a tetraacyldisaccharide 1-phosphate intermediate (termed DS-1-P) to form tetraacyldisaccharide 1,4'-bis-phosphate (lipid IVA). The sequence is that of Tetraacyldisaccharide 4'-kinase from Maricaulis maris (strain MCS10) (Caulobacter maris).